A 402-amino-acid polypeptide reads, in one-letter code: Acetylornithine aminotransferase (402 aa).

Residues 106-107 (GA) and phenylalanine 132 contribute to the pyridoxal 5'-phosphate site. Arginine 135 is a N(2)-acetyl-L-ornithine binding site. 217–220 (DEVQ) provides a ligand contact to pyridoxal 5'-phosphate. Lysine 247 is subject to N6-(pyridoxal phosphate)lysine. Residue threonine 275 participates in N(2)-acetyl-L-ornithine binding. Threonine 276 provides a ligand contact to pyridoxal 5'-phosphate.

It belongs to the class-III pyridoxal-phosphate-dependent aminotransferase family. ArgD subfamily. Homodimer. Pyridoxal 5'-phosphate is required as a cofactor.

The protein localises to the cytoplasm. It carries out the reaction N(2)-acetyl-L-ornithine + 2-oxoglutarate = N-acetyl-L-glutamate 5-semialdehyde + L-glutamate. Its pathway is amino-acid biosynthesis; L-arginine biosynthesis; N(2)-acetyl-L-ornithine from L-glutamate: step 4/4. This chain is Acetylornithine aminotransferase, found in Streptomyces coelicolor (strain ATCC BAA-471 / A3(2) / M145).